The chain runs to 457 residues: Argininosuccinate lyase (457 aa).

Belongs to the lyase 1 family. Argininosuccinate lyase subfamily.

It is found in the cytoplasm. It carries out the reaction 2-(N(omega)-L-arginino)succinate = fumarate + L-arginine. It participates in amino-acid biosynthesis; L-arginine biosynthesis; L-arginine from L-ornithine and carbamoyl phosphate: step 3/3. This Serratia proteamaculans (strain 568) protein is Argininosuccinate lyase.